The sequence spans 198 residues: Calcium channel flower (198 aa).

3 helical membrane-spanning segments follow: residues 36-56 (LGIV…LSII), 67-89 (IIQM…VCIE), and 114-134 (AVPP…GLIF).

This sequence belongs to the calcium channel flower family. As to quaternary structure, homomultimer. Associates with the dally/ magu complex.

The protein localises to the cell membrane. Its subcellular location is the cytoplasmic vesicle. The protein resides in the secretory vesicle. It is found in the synaptic vesicle membrane. It localises to the presynaptic cell membrane. The protein localises to the endosome. With respect to regulation, channel activity is inhibited by La(3+), which reduces Ca(2+) influx and thus inhibits it's function in promoting activity-dependent bulk endocytosis (ADBE) in response to high stimuli. Its function is as follows. Transmembrane protein which mediates synaptic endocytosis, fitness-based cell culling, neuronal culling, morphogen gradient scaling, and calcium transport. Regulates synaptic endocytosis and hence couples exo- with endocytosis. Controls two major modes of synaptic vesicle (SV) endocytosis in the synaptic boutons of neuromuscular junctions (NMJs); Ca(2+) channel-independent Clathrin-mediated endocytosis (CME) in response to mild stimulation, and Ca(2+) channel-dependent activity-dependent bulk endocytosis (ADBE) in response to strong stimulation. Functions in ADBE and subsequent SV reformation from bulk endosomes by initiating Ca(2+) channel-dependent phosphatidylinositol 4,5-bisphosphate (PtdIns(4,5)P2) compartmentalization in synaptic boutons. There it acts at the periactive zone to provide the low Ca(2+) levels required to initiate Calcineurin activation and upregulate PtdIns(4,5)P2. Conversely PtdIns(4,5)P2 enhances fwe Ca(2+) channel-activity, establishing a positive feedback loop that induces PtdIns(4,5)P2 microdomain at the periactive zone. These microdomains trigger bulk membrane invagination (i.e. ADBE) by triggering actin polymerization while also promoting localization of fwe to bulk endosomes, thereby removing the ADBE trigger to reduce endocytosis and prevent excess membrane uptake. PtdIns(4,5)P2 then promotes SV reformation from the bulk endosomes, to coordinate ADBE and subsequent SV reformation. Different combinations of the flower isoforms at the cell membrane are also required for the identification and elimination of suboptimal or supernumerary cells during development, regeneration, and adulthood. Required for the recognition and elimination of unfit cells in the developing wing during cell competition. In the developing pupal retina, mediates the elimination of unwanted postmitotic neurons, including supernumerary photoreceptor neurons that form at the periphery of the retina and are contained within incomplete ommatidia units. Also required for efficient elimination and replacement of old neurons by newly generated neurons during regeneration in the adult brain following mechanical injury. Downstream of the flower fitness fingerprints, cells identified as unwanted or unfit are eliminated via apoptosis through the expression of ahuizotl (azot). However, the cells marked for elimination by the flower isoforms only undergo apoptosis if additional thresholds are met; (1) their neighboring fit/healthy cells express different levels of the fwe isoforms, and (2) the levels of the protective signal SPARC expressed by the loser or unwanted cells are unable to inhibit caspase activation. These additional thresholds for flower-mediated apoptosis, allows useful cells to recover from transient and limited stress before they are unnecessarily eliminated. Functions with dally and magu in a mechanism of scaling, which utilises apoptosis to ensure that the dpp morphogen gradient, which mediates organ growth, remains proportional to the size of the growing wing. In this mechanism, fwe represses dally- and Magu-dependent activity in expanding the gradient, and dally/Magu inhibits fwe-dependent apoptosis to keep cell death rate low. When the levels of these different proteins are optimally regulated the gradient correctly scales with organ growth but when this fails, fwe-mediated apoptosis is activated to trim the developing tissue to match the correct size of the gradient. This is Calcium channel flower from Drosophila persimilis (Fruit fly).